Here is a 624-residue protein sequence, read N- to C-terminus: MKGQETRGFQSEVKQLLHLMIHSLYSNKEIFLRELISNASDAADKLRFRALSNPDLYEGDGELRVRVSFDKDKRTLTIADNGVGMNRDEVIDHLGTIAKSGTKSFLESMGSDQAKDSQLIGQFGVGFYSAFIVADKVTVRTRAAGDKPENGVFWESAGEGEYTVADITKNDRGTEITLHLREGEDEFLDDWRVRSIISKYSDHIALPVEIEKREEKDGETVISWEKINKAQALWTRNKSEIKDDEYNEFYKHIAHDFTDPLTWSHNRVEGKQEYTSLLYIPSQAPWDLWNRDHKHGLKLYVQRVFIMDDAEQFMPNYLRFVRGLIDSNDLPLNVSREILQDSTVTRNLRSALTKRVLQMLEKLAKDDAEKYQTFWKQFGLVLKEGPAEDHANQEAIAKLLRFASTHTDSSAQTVSLEDYVSRMKEGQEKIYYITADSYAAAKNSPHLELLRKKGIEVLLLSDRIDEWMMNYLTEFDGKAFQSVAKADESIEKLADEVDENAKEAEKVLEPFVERVKTLLGDRVKDVRLTHRLTDTPAIVTTDADEMSTQMAKLFAAAGQSVPEVKYIFELNPDHVLVKRTADTKDEAQFKEWVELLLDQALFAERGTLEDPNQFIRRMNQLLVS.

An a; substrate-binding region spans residues Met1–Arg336. The tract at residues Glu337–Lys552 is b. The tract at residues Leu553–Ser624 is c.

It belongs to the heat shock protein 90 family. As to quaternary structure, homodimer.

It is found in the cytoplasm. Functionally, molecular chaperone. Has ATPase activity. The sequence is that of Chaperone protein HtpG from Salmonella choleraesuis (strain SC-B67).